We begin with the raw amino-acid sequence, 248 residues long: Probable transcriptional regulatory protein RL3983 (248 aa).

The protein belongs to the TACO1 family.

The protein resides in the cytoplasm. The chain is Probable transcriptional regulatory protein RL3983 from Rhizobium johnstonii (strain DSM 114642 / LMG 32736 / 3841) (Rhizobium leguminosarum bv. viciae).